The following is a 311-amino-acid chain: Porphobilinogen deaminase (311 aa).

Cys-241 carries the S-(dipyrrolylmethanemethyl)cysteine modification.

Belongs to the HMBS family. Monomer. Dipyrromethane serves as cofactor.

It carries out the reaction 4 porphobilinogen + H2O = hydroxymethylbilane + 4 NH4(+). Its pathway is porphyrin-containing compound metabolism; protoporphyrin-IX biosynthesis; coproporphyrinogen-III from 5-aminolevulinate: step 2/4. Its function is as follows. Tetrapolymerization of the monopyrrole PBG into the hydroxymethylbilane pre-uroporphyrinogen in several discrete steps. In Campylobacter curvus (strain 525.92), this protein is Porphobilinogen deaminase.